The primary structure comprises 309 residues: D-alanine--D-alanine ligase (309 aa).

An ATP-grasp domain is found at 105–304 (KQIWHSVGLP…FNDLVERILA (200 aa)). Residue 135–190 (LQELGGRVIVKPAREGSSIGMSIADNGRSLALALQHAAEFDDDLLVEQWVEGAEYT) participates in ATP binding. Residues aspartate 258, glutamate 271, and asparagine 273 each coordinate Mg(2+).

This sequence belongs to the D-alanine--D-alanine ligase family. Mg(2+) serves as cofactor. It depends on Mn(2+) as a cofactor.

It is found in the cytoplasm. It carries out the reaction 2 D-alanine + ATP = D-alanyl-D-alanine + ADP + phosphate + H(+). Its pathway is cell wall biogenesis; peptidoglycan biosynthesis. Functionally, cell wall formation. This is D-alanine--D-alanine ligase from Idiomarina loihiensis (strain ATCC BAA-735 / DSM 15497 / L2-TR).